Here is a 123-residue protein sequence, read N- to C-terminus: Small ribosomal subunit protein uS13 (123 aa).

Residues 94–123 are disordered; it reads AGLPVRGQRTKTNARTRKGPKKTVGVQRKK. Over residues 101–123 the composition is skewed to basic residues; sequence QRTKTNARTRKGPKKTVGVQRKK.

The protein belongs to the universal ribosomal protein uS13 family. In terms of assembly, part of the 30S ribosomal subunit. Forms a loose heterodimer with protein S19. Forms two bridges to the 50S subunit in the 70S ribosome.

In terms of biological role, located at the top of the head of the 30S subunit, it contacts several helices of the 16S rRNA. In the 70S ribosome it contacts the 23S rRNA (bridge B1a) and protein L5 of the 50S subunit (bridge B1b), connecting the 2 subunits; these bridges are implicated in subunit movement. Contacts the tRNAs in the A and P-sites. In Acetivibrio thermocellus (strain ATCC 27405 / DSM 1237 / JCM 9322 / NBRC 103400 / NCIMB 10682 / NRRL B-4536 / VPI 7372) (Clostridium thermocellum), this protein is Small ribosomal subunit protein uS13.